A 122-amino-acid chain; its full sequence is Large ribosomal subunit protein uL18 (122 aa).

Belongs to the universal ribosomal protein uL18 family. In terms of assembly, part of the 50S ribosomal subunit; part of the 5S rRNA/L5/L18/L25 subcomplex. Contacts the 5S and 23S rRNAs.

Its function is as follows. This is one of the proteins that bind and probably mediate the attachment of the 5S RNA into the large ribosomal subunit, where it forms part of the central protuberance. The chain is Large ribosomal subunit protein uL18 from Hydrogenobaculum sp. (strain Y04AAS1).